Here is a 397-residue protein sequence, read N- to C-terminus: Tryptophan synthase beta chain (397 aa).

Lys-87 carries the post-translational modification N6-(pyridoxal phosphate)lysine.

Belongs to the TrpB family. Tetramer of two alpha and two beta chains. Requires pyridoxal 5'-phosphate as cofactor.

The catalysed reaction is (1S,2R)-1-C-(indol-3-yl)glycerol 3-phosphate + L-serine = D-glyceraldehyde 3-phosphate + L-tryptophan + H2O. It functions in the pathway amino-acid biosynthesis; L-tryptophan biosynthesis; L-tryptophan from chorismate: step 5/5. Its function is as follows. The beta subunit is responsible for the synthesis of L-tryptophan from indole and L-serine. The chain is Tryptophan synthase beta chain from Escherichia coli O127:H6 (strain E2348/69 / EPEC).